A 395-amino-acid chain; its full sequence is L-rhamnonate dehydratase (395 aa).

Substrate-binding residues include His-23 and Arg-49. Mg(2+) contacts are provided by Asp-215, Glu-241, and Glu-269. Residue His-319 is the Proton acceptor of the active site. Position 339 (Glu-339) interacts with substrate.

The protein belongs to the mandelate racemase/muconate lactonizing enzyme family. RhamD subfamily. In terms of assembly, homooctamer; tetramer of dimers. Requires Mg(2+) as cofactor.

The enzyme catalyses L-rhamnonate = 2-dehydro-3-deoxy-L-rhamnonate + H2O. In terms of biological role, catalyzes the dehydration of L-rhamnonate to 2-keto-3-deoxy-L-rhamnonate (KDR). The chain is L-rhamnonate dehydratase (rhmD) from Polaromonas sp. (strain JS666 / ATCC BAA-500).